The sequence spans 262 residues: Phosphate import ATP-binding protein PstB (262 aa).

One can recognise an ABC transporter domain in the interval 15–257 (AKASNLNLWY…PQKSKTEQYI (243 aa)). 47–54 (GPSGCGKS) provides a ligand contact to ATP.

The protein belongs to the ABC transporter superfamily. Phosphate importer (TC 3.A.1.7) family. As to quaternary structure, the complex is composed of two ATP-binding proteins (PstB), two transmembrane proteins (PstC and PstA) and a solute-binding protein (PstS).

The protein localises to the cell inner membrane. It carries out the reaction phosphate(out) + ATP + H2O = ADP + 2 phosphate(in) + H(+). Part of the ABC transporter complex PstSACB involved in phosphate import. Responsible for energy coupling to the transport system. The polypeptide is Phosphate import ATP-binding protein PstB (Wolinella succinogenes (strain ATCC 29543 / DSM 1740 / CCUG 13145 / JCM 31913 / LMG 7466 / NCTC 11488 / FDC 602W) (Vibrio succinogenes)).